Consider the following 1150-residue polypeptide: Solute carrier family 12 member 6 (1150 aa).

A disordered region spans residues 1 to 108; that stretch reads MHPPEATTKM…GEHSQLLDDG (108 aa). Topologically, residues 1 to 135 are cytoplasmic; it reads MHPPEATTKM…DEYFDKNLAL (135 aa). Residues 28–45 show a composition bias toward low complexity; it reads LSDTSPDLSSRSSSRVRF. Serine 32 is subject to Phosphoserine. Positions 80 to 101 are enriched in polar residues; the sequence is DRTSNPQDVTEDPSQNSITGEH. Position 120 is a phosphoserine (serine 120). The chain crosses the membrane as a discontinuously helical span at residues 136–158; sequence FEEEMDTRPKVSSLLNRMANYTN. K(+)-binding residues include serine 147 and serine 148. Serine 148 is subject to Phosphoserine. Residue asparagine 151 participates in chloride binding. At 159–165 the chain is on the extracellular side; that stretch reads LTQGAKE. The tract at residues 161–181 is disordered; it reads QGAKEHEEAENITEGKKKPTK. Over residues 163–177 the composition is skewed to basic and acidic residues; the sequence is AKEHEEAENITEGKK. A helical transmembrane segment spans residues 166-188; sequence HEEAENITEGKKKPTKSPQMGTF. Topologically, residues 189–211 are cytoplasmic; the sequence is MGVYLPCLQNIFGVILFLRLTWV. The chain crosses the membrane as a helical span at residues 212 to 245; it reads VGTAGILQAFAIVLICCCCTMLTAISMSAIATNG. Residues 246–263 lie on the Extracellular side of the membrane; sequence VVPAGGSYFMISRALGPE. 2 helical membrane passes run 264 to 287 and 288 to 316; these read FGGA…ILGA and IEIF…AMLN. Tyrosine 283 contributes to the K(+) binding site. Topologically, residues 317–433 are extracellular; it reads NMRVYGTAFL…FVHNNVISIQ (117 aa). Cysteine 375 and cysteine 390 are joined by a disulfide. Residues asparagine 379, asparagine 398, asparagine 411, and asparagine 417 are each glycosylated (N-linked (GlcNAc...) asparagine). The cysteines at positions 410 and 420 are disulfide-linked. The chain crosses the membrane as a helical span at residues 434 to 454; sequence GIPGLASGIITENLWSNYLPK. K(+)-binding residues include isoleucine 443, threonine 444, and asparagine 446. The chloride site is built by isoleucine 443 and threonine 444. Positions 447 and 448 each coordinate chloride. At 455 to 464 the chain is on the cytoplasmic side; that stretch reads GEIIEKPSAK. A helical membrane pass occupies residues 465–487; sequence SSDVLGNLNHEYVLADITTSFTL. At 488–518 the chain is on the extracellular side; sequence LVGIFFPSVTGIMAGSNRSGDLKDAQKSIPI. K(+) is bound at residue threonine 497. The helical transmembrane segment at 519 to 545 threads the bilayer; sequence GTILAILTTSFVYLSNVVLFGACIEGV. Residues 546 to 568 are Cytoplasmic-facing; that stretch reads VLRDKFGDAVKGNLVVGTLSWPS. The next 2 helical transmembrane spans lie at 569–589 and 590–612; these read PWVI…QSLT and GAPR…VFGH. Isoleucine 603 contributes to the chloride binding site. Residues 613–629 lie on the Cytoplasmic side of the membrane; the sequence is SKANGEPTWALLLTAAI. The next 2 helical transmembrane spans lie at 630-649 and 650-665; these read AELG…LSMF and FLMC…ALQT. Tyrosine 654 contacts chloride. Topologically, residues 666-1150 are cytoplasmic; the sequence is LLRTPNWRPR…GGSEVITIYS (485 aa). Residues 682–691 form a scissor helix region; that stretch reads ALSFMGMSIC. Serine 736 is subject to Phosphoserine. Residue threonine 778 is modified to Phosphothreonine. Residue serine 981 is modified to Phosphoserine. Threonine 991 carries the post-translational modification Phosphothreonine. Residues serine 1023, serine 1029, and serine 1032 each carry the phosphoserine modification. Threonine 1048 is modified (phosphothreonine). Phosphotyrosine is present on tyrosine 1121.

The protein belongs to the SLC12A transporter family. K/Cl co-transporter subfamily. Homodimer; adopts a domain-swap conformation at the scissor helices connecting the transmembrane domain and C-terminal domain. Heterodimer with K-Cl cotransporter SLC12A5. Interacts (via C-terminus) with CKB; the interaction may be required for potassium-chloride cotransport activity. Post-translationally, phosphorylated, phosphorylation regulates transporter activity. Phosphorylated at Thr-991 and Thr-1048 by OXSR1/OSR1 and STK39/SPAK downstream of WNK kinases (WNK1, WNK2, WNK3 or WNK4), inhibiting the potassium-chloride cotransport activity. N-glycosylated. Expressed in hippocampus and corpus callosum (at protein level). Highly expressed throughout the brain and detected at lower levels in kidney. Highly expressed in highly myelinated white matter of the brain, but not in gray matter. Detected in the corpus callosum, in packed cell layers of the hippocampus and in Purkinje neurons within the cerebellum. Highly expressed in white matter in the spinal cord, but not in dorsal root ganglia or sciatic nerve. Colocalizes with the oligodendrocyte marker CNP. Expressed in hippocampus in CA1, and to a lesser extent CA3 pyramidal cells. Also expressed in cortex, mostly in large neurons and in the large cerebellar Purkinje cells. In terms of tissue distribution, highly expressed in kidney, but not detected in brain.

Its subcellular location is the cell membrane. The protein localises to the basolateral cell membrane. The enzyme catalyses K(+)(in) + chloride(in) = K(+)(out) + chloride(out). With respect to regulation, inhibited following phosphorylation by OXSR1/OSR1 and STK39/SPAK: phosphorylation takes place downstream of WNK kinases (WNK1, WNK2, WNK3 or WNK4) in response to hyperosmotic stress and subsequent cell shrinkage. In terms of biological role, mediates electroneutral potassium-chloride cotransport when activated by cell swelling. May contribute to cell volume homeostasis in single cells. Functionally, mediates electroneutral potassium-chloride cotransport when activated by cell swelling. May contribute to cell volume homeostasis in single cells. The sequence is that of Solute carrier family 12 member 6 (Slc12a6) from Mus musculus (Mouse).